Reading from the N-terminus, the 142-residue chain is Large ribosomal subunit protein uL13 (142 aa).

It belongs to the universal ribosomal protein uL13 family. Part of the 50S ribosomal subunit.

Functionally, this protein is one of the early assembly proteins of the 50S ribosomal subunit, although it is not seen to bind rRNA by itself. It is important during the early stages of 50S assembly. This is Large ribosomal subunit protein uL13 from Maridesulfovibrio salexigens (strain ATCC 14822 / DSM 2638 / NCIMB 8403 / VKM B-1763) (Desulfovibrio salexigens).